The sequence spans 438 residues: Trigger factor (438 aa).

One can recognise a PPIase FKBP-type domain in the interval 163-248 (GDTAIIDFAG…VKEIKRKEIA (86 aa)).

It belongs to the FKBP-type PPIase family. Tig subfamily.

Its subcellular location is the cytoplasm. It carries out the reaction [protein]-peptidylproline (omega=180) = [protein]-peptidylproline (omega=0). Involved in protein export. Acts as a chaperone by maintaining the newly synthesized protein in an open conformation. Functions as a peptidyl-prolyl cis-trans isomerase. In Pelotomaculum thermopropionicum (strain DSM 13744 / JCM 10971 / SI), this protein is Trigger factor.